The sequence spans 287 residues: ATP synthase gamma chain (287 aa).

It belongs to the ATPase gamma chain family. F-type ATPases have 2 components, CF(1) - the catalytic core - and CF(0) - the membrane proton channel. CF(1) has five subunits: alpha(3), beta(3), gamma(1), delta(1), epsilon(1). CF(0) has three main subunits: a, b and c.

It localises to the cell inner membrane. Produces ATP from ADP in the presence of a proton gradient across the membrane. The gamma chain is believed to be important in regulating ATPase activity and the flow of protons through the CF(0) complex. This Proteus mirabilis (strain HI4320) protein is ATP synthase gamma chain.